Consider the following 439-residue polypeptide: 26S proteasome regulatory subunit 6A (439 aa).

At M1 the chain carries N-acetylmethionine. S9 is modified (phosphoserine). 227 to 234 (GPPGTGKT) serves as a coordination point for ATP. The residue at position 376 (S376) is a Phosphoserine.

Belongs to the AAA ATPase family. In terms of assembly, component of the 19S proteasome regulatory particle complex. The 26S proteasome consists of a 20S core particle (CP) and two 19S regulatory subunits (RP). The regulatory particle is made of a lid composed of 9 subunits, a base containing 6 ATPases including PSMC3 and few additional components. Interacts with PAAF1.

The protein resides in the cytoplasm. It localises to the nucleus. In terms of biological role, component of the 26S proteasome, a multiprotein complex involved in the ATP-dependent degradation of ubiquitinated proteins. This complex plays a key role in the maintenance of protein homeostasis by removing misfolded or damaged proteins, which could impair cellular functions, and by removing proteins whose functions are no longer required. Therefore, the proteasome participates in numerous cellular processes, including cell cycle progression, apoptosis, or DNA damage repair. PSMC3 belongs to the heterohexameric ring of AAA (ATPases associated with diverse cellular activities) proteins that unfolds ubiquitinated target proteins that are concurrently translocated into a proteolytic chamber and degraded into peptides. The chain is 26S proteasome regulatory subunit 6A (Psmc3) from Rattus norvegicus (Rat).